Reading from the N-terminus, the 925-residue chain is Antiviral innate immune response receptor RIG-I (925 aa).

CARD domains are found at residues 1–87 and 92–172; these read MTTE…GLYE and WDFK…KTLK. Serine 8 is subject to (Microbial infection) Phosphoserine. A Phosphoserine modification is found at serine 8. Glycyl lysine isopeptide (Lys-Gly) (interchain with G-Cter in ubiquitin) cross-links involve residues lysine 48, lysine 96, lysine 154, and lysine 164. Residue threonine 170 is modified to Phosphothreonine. Residues lysine 172, lysine 181, lysine 193, and lysine 203 each participate in a glycyl lysine isopeptide (Lys-Gly) (interchain with G-Cter in ubiquitin) cross-link. The segment at 218 to 925 is interaction with ZC3HAV1; it reads ECQNLSENSC…IPFDPAEMSK (708 aa). Residues 251–430 enclose the Helicase ATP-binding domain; the sequence is ALPAMKGKNT…DEALDYICKL (180 aa). Residue 264–271 coordinates ATP; sequence APTGCGKT. The short motif at 372–375 is the DECH box element; it reads DECH. 2 positions are modified to (Microbial infection) Deamidated asparagine; by herpes simplex virus 1/HHV-1 UL37: asparagine 495 and asparagine 549. The 167-residue stretch at 610-776 folds into the Helicase C-terminal domain; that stretch reads KLEDLCFILQ…RLQTWDEAVF (167 aa). The segment at 735-925 is mediates interaction with RNF135; that stretch reads GSKCFLLTSN…IPFDPAEMSK (191 aa). Threonine 770 is subject to Phosphothreonine; by CK2. The RLR CTR domain occupies 794–925; it reads QEKPKPVPDK…IPFDPAEMSK (132 aa). Cysteine 810 serves as a coordination point for Zn(2+). Residue lysine 812 forms a Glycyl lysine isopeptide (Lys-Gly) (interchain with G-Cter in ubiquitin) linkage. Cysteine 813 is a binding site for Zn(2+). Residues serine 854 and serine 855 each carry the phosphoserine; by CK2 modification. Position 858 is an N6-acetyllysine (lysine 858). Zn(2+) contacts are provided by cysteine 864 and cysteine 869. Lysine 909 carries the N6-acetyllysine modification.

It belongs to the helicase family. RLR subfamily. In terms of assembly, monomer; maintained as a monomer in an autoinhibited state. Upon binding of viral RNAs and conformational shift, homooligomerizes and forms filaments on these molecules. Interacts (via tandem CARD domain) with MAVS/IPS1 promoting its filamentation. Interacts with DHX58/LGP2, IKBKE, TBK1 and STING1. Interacts (via CARD domain) with TRIM25 (via SPRY domain). Interacts (double-stranded RNA-bound oligomeric form) with RNF135 (homodimer); involved in RNA length-dependent activation of the RIG-I signaling pathway. Interacts with CYLD. Interacts with NLRC5; blocks the interaction of MAVS/IPS1 to RIGI. Interacts with SRC. Interacts with DDX60. Interacts with isoform 2 of ZC3HAV1 (via zinc-fingers) in an RNA-dependent manner. Interacts (via tandem CARD domain) with SEC14L1; the interaction is direct and impairs the interaction of RIGI with MAVS/IPS1. Interacts with VCP/p97; interaction is direct and allows the recruitment of RNF125 and subsequent ubiquitination and degradation. Interacts with NOP53; may regulate RIGI through USP15-mediated 'Lys-63'-linked deubiquitination. Interacts with SIGLEC10, CBL and PTPN11; within a negative feedback loop leading to RIGI degradation. Interacts with LRRC25. Interacts with ZCCHC3; leading to activation of RIGI. Interacts with RNF123. Interacts with UBE2D3 and UBE2N; E2 ubiquitin ligases involved in RNF135-mediated ubiquitination of RIGI and activation of the RIG-I signaling pathway. Interacts with IFIT3. Interacts with DDX3X. Interacts with RTN3. Interacts with ARL16; this interaction is GTP-dependent and induced upon viral infection; this interaction suppresses the RNA sensing activity of RIGI. Interacts with DHX16; this interaction enhances RIGI-mediated antiviral response. Interacts with IRGM; promoting RIGI degradation. Interacts with IFI6; this interaction inhibits RIGI activation. Interacts with ECSIT; this interaction bridges RIGI to the MAVS complex at the mitochondrion. Interacts with YWHAE; this interaction drives RIGI at the mitochondrion. As to quaternary structure, (Microbial infection) Interacts with protein Z of Guanarito virus, Machupo virus, Junin arenavirus and Sabia virus. This interaction disrupts its interaction with MAVS/IPS1, impeding downstream IRF3 and NF-kappa-B activation and resulting in decreased IFN-beta induction. (Microbial infection) Interacts (via CARD domain) with Human respiratory syncytial virus A non-structural protein 2 (NS2) and this interaction disrupts its interaction with MAVS/IPS1, impeding downstream IRF3 activation. In terms of assembly, (Microbial infection) Interacts with Rotavirus A non-structural protein 1 (NSP1) and this interaction induces down-regulation of RIGI. As to quaternary structure, (Microbial infection) Interacts with paramyxoviruses (Sendai virus, Nipah virus, Measles virus and Parainfluenza virus 5) protein V; this interaction inhibits TRIM25-mediated ubiquitination of RIG-I and prevents downstream RIG-I signaling thereby inhibiting the IFN responses. (Microbial infection) Interacts with herpes simplex virus 1 protein US11; this interaction prevents the interaction of MAVS/IPS1 to RIGI. In terms of assembly, (Microbial infection) Interacts with herpes simplex virus 1 protein UL37; this interaction deaminates RIGI and inhibits its activation. As to quaternary structure, (Microbial infection) Interacts with Severe fever with thrombocytopenia virus (SFTSV) NSs; this interaction this interaction sequesters RIGI in NSs-induced cytoplasmic inclusion bodies thereby inhibiting the IFN responses. Post-translationally, phosphorylated in resting cells and dephosphorylated in RNA virus-infected cells. Phosphorylation at Thr-770, Ser-854 and Ser-855 results in inhibition of its activity while dephosphorylation at these sites results in its activation. Ubiquitinated. 'Lys-63' ubiquitination by RNF135, which occurs after RNA-binding and homodimerization, releases the autoinhibition of the CARD domains by the RLR CTR domain, an essential step in the activation of the RIG-I signaling pathway. Lys-172 is the critical site of ubiquitination for MAVS/IPS1 binding and to induce anti-viral signal transduction. Lys-154, Lys-164 and Lys-172 are shared sites for RNF135-mediated and TRIM4-mediated ubiquitination. Also undergoes 'Lys-48' ubiquitination at Lys-181 by RNF125 that leads to proteasomal degradation. 'Lys-48' ubiquitination follows viral infection and is enhanced by 'Lys-63'-linked ubiquitination of the CARD domains that promotes interaction with VCP/p97 and subsequent recruitment of RNF125. Within a negative feedback loop involving SIGLEC10 and PTPN11, 'Lys-48' ubiquitination at Lys-812 by CBL also elicits the proteasomal degradation of RIGI. Deubiquitinated by CYLD, a protease that selectively cleaves 'Lys-63'-linked ubiquitin chains. Also probably deubiquitinated by USP17L2/USP17 that cleaves 'Lys-48'- and 'Lys-63'-linked ubiquitin chains and positively regulates the receptor. Ubiquitinated by TRIM40 via 'Lys-48'-linked ubiquitination; leading to proteasomal degradation. Deubiquitinated by USP27X that cleaves 'Lys-63'-linked ubiquitin chains and inhibits the innate immune receptor activity. Deubiquitinated by USP3 that also cleaves 'Lys-63'-linked ubiquitin chains and inhibits the innate immune receptor activity. Undergoes 'Lys-48'-linked ubiquitination catalyzed by MARCHF5 at Lys-193 and Lys-203, leading to proteasomal degradation. In terms of processing, phosphorylated at Ser-8 and Thr-170; these phosphorylations suppresse the TRIM25-mediated 'Lys-63'-linked ubiquitination of RIG-I and thereby prevents RIG-I downstream signaling. Dephosphorylated by phosphatases PPP1CA/PPP1CC; this step is essential to activate RIGI and initiate downstream signaling. Post-translationally, ISGylated. Conjugated to ubiquitin-like protein ISG15 upon IFN-beta stimulation. ISGylation negatively regulates its function in antiviral signaling response. Sumoylated, probably by MUL1; inhibiting its polyubiquitination. In terms of processing, acetylated in response to RNA virus infection. Deacetylated by HDAC6 in the presence of viral mRNAs which is required for detection of viral RNA by RIGI. Post-translationally, (Microbial infection) Deamidated on Asn-495 and Asn-549 by herpes simplex virus 1 protein UL37. These modifications eliminate RIGI detection of viral RNA and restriction of viral replication. Degraded via selective autophagy following interaction with IRGM. IRGM promotes RIGI recruitment to autophagosome membranes, promoting its SQSTM1/p62-dependent autophagic degradation. In terms of processing, (Microbial infection) Cleaved by the protease 3C of coxsackievirus B3, poliovirus and enterovirus 71 allowing the virus to disrupt the host type I interferon production. Post-translationally, (Microbial infection) Phosphorylated at Ser-8 by herpes simplex virus 1 protein US3 leading to inhibition of critical RIGI activation steps. Present in vascular smooth cells (at protein level).

It is found in the cytoplasm. Its subcellular location is the cell projection. It localises to the ruffle membrane. The protein resides in the cytoskeleton. The protein localises to the cell junction. It is found in the tight junction. It carries out the reaction ATP + H2O = ADP + phosphate + H(+). Functionally, innate immune receptor that senses cytoplasmic viral nucleic acids and activates a downstream signaling cascade leading to the production of type I interferons and pro-inflammatory cytokines. Forms a ribonucleoprotein complex with viral RNAs on which it homooligomerizes to form filaments. The homooligomerization allows the recruitment of RNF135 an E3 ubiquitin-protein ligase that activates and amplifies the RIG-I-mediated antiviral signaling in an RNA length-dependent manner through ubiquitination-dependent and -independent mechanisms. Upon activation, associates with mitochondria antiviral signaling protein (MAVS/IPS1) that activates the IKK-related kinases TBK1 and IKBKE which in turn phosphorylate the interferon regulatory factors IRF3 and IRF7, activating transcription of antiviral immunological genes including the IFN-alpha and IFN-beta interferons. Ligands include 5'-triphosphorylated ssRNAs and dsRNAs but also short dsRNAs (&lt;1 kb in length). In addition to the 5'-triphosphate moiety, blunt-end base pairing at the 5'-end of the RNA is very essential. Overhangs at the non-triphosphorylated end of the dsRNA RNA have no major impact on its activity. A 3'overhang at the 5'triphosphate end decreases and any 5'overhang at the 5' triphosphate end abolishes its activity. Detects both positive and negative strand RNA viruses including members of the families Paramyxoviridae: Human respiratory syncytial virus and measles virus (MeV), Rhabdoviridae: vesicular stomatitis virus (VSV), Orthomyxoviridae: influenza A and B virus, Flaviviridae: Japanese encephalitis virus (JEV), hepatitis C virus (HCV), dengue virus (DENV) and west Nile virus (WNV). It also detects rotaviruses and reoviruses. Detects and binds to SARS-CoV-2 RNAs which is inhibited by m6A RNA modifications. Also involved in antiviral signaling in response to viruses containing a dsDNA genome such as Epstein-Barr virus (EBV). Detects dsRNA produced from non-self dsDNA by RNA polymerase III, such as Epstein-Barr virus-encoded RNAs (EBERs). May play important roles in granulocyte production and differentiation, bacterial phagocytosis and in the regulation of cell migration. The chain is Antiviral innate immune response receptor RIG-I from Homo sapiens (Human).